The chain runs to 198 residues: Na(+)-translocating NADH-quinone reductase subunit E (198 aa).

6 helical membrane passes run 11–31 (AVFVENMALAFFLGMCTFLAV), 35–55 (VSTAFGLGIAVTVVLGISVPA), 77–97 (FLNFITFIGVIAAIVQVLEMI), 109–129 (LGIFLPLITVNCAIFGGVSFM), 140–160 (IVYGFGSGMGWMLAIVALAGI), and 176–196 (LGITFISTGLMALGFMSFAGV).

This sequence belongs to the NqrDE/RnfAE family. As to quaternary structure, composed of six subunits; NqrA, NqrB, NqrC, NqrD, NqrE and NqrF.

The protein localises to the cell inner membrane. It carries out the reaction a ubiquinone + n Na(+)(in) + NADH + H(+) = a ubiquinol + n Na(+)(out) + NAD(+). In terms of biological role, NQR complex catalyzes the reduction of ubiquinone-1 to ubiquinol by two successive reactions, coupled with the transport of Na(+) ions from the cytoplasm to the periplasm. NqrA to NqrE are probably involved in the second step, the conversion of ubisemiquinone to ubiquinol. This Yersinia pestis bv. Antiqua (strain Nepal516) protein is Na(+)-translocating NADH-quinone reductase subunit E.